The chain runs to 400 residues: Dual specificity mitogen-activated protein kinase kinase 2 (400 aa).

Met1 carries the N-acetylmethionine modification. Position 23 is a phosphoserine (Ser23). A Protein kinase domain is found at 72–369 (FERISELGAG…LKMLTNHTFI (298 aa)). Residues 78–86 (LGAGNGGVV) and Lys101 contribute to the ATP site. Residue Asp194 is the Proton acceptor of the active site. Residues Ser222 and Ser226 each carry the (Microbial infection) O-acetylserine; by Yersinia YopJ; alternate modification. Position 222 is a phosphoserine; by RAF; alternate (Ser222). Residue Ser226 is modified to Phosphoserine; alternate. The interval 286–310 (GEEGEPHSISPRPRPPGRPVSGHGM) is disordered. Residues Ser293, Ser295, and Ser306 each carry the phosphoserine modification. Residues Thr394 and Thr396 each carry the phosphothreonine modification.

This sequence belongs to the protein kinase superfamily. STE Ser/Thr protein kinase family. MAP kinase kinase subfamily. In terms of assembly, interacts with MORG1. Interacts with SGK1. Interacts with KSR1. Interacts with KSR1 and BRAF; the interaction with KSR1 mediates KSR1-BRAF dimerization. Interacts with GLS. It depends on Mg(2+) as a cofactor. MAPKK is itself dependent on Ser/Thr phosphorylation for activity catalyzed by MAP kinase kinase kinases (RAF or MEKK1). Phosphorylated by MAP2K1/MEK1. Post-translationally, (Microbial infection) Acetylation of Ser-222 and Ser-226 by Yersinia YopJ prevents phosphorylation and activation, thus blocking the MAPK signaling pathway.

The protein localises to the cytoplasm. It is found in the membrane. The enzyme catalyses L-seryl-[protein] + ATP = O-phospho-L-seryl-[protein] + ADP + H(+). It carries out the reaction L-threonyl-[protein] + ATP = O-phospho-L-threonyl-[protein] + ADP + H(+). The catalysed reaction is L-tyrosyl-[protein] + ATP = O-phospho-L-tyrosyl-[protein] + ADP + H(+). Catalyzes the concomitant phosphorylation of a threonine and a tyrosine residue in a Thr-Glu-Tyr sequence located in MAP kinases. Activates the ERK1 and ERK2 MAP kinases. Activates BRAF in a KSR1 or KSR2-dependent manner; by binding to KSR1 or KSR2 releases the inhibitory intramolecular interaction between KSR1 or KSR2 protein kinase and N-terminal domains which promotes KSR1 or KSR2-BRAF dimerization and BRAF activation. This is Dual specificity mitogen-activated protein kinase kinase 2 (MAP2K2) from Homo sapiens (Human).